Reading from the N-terminus, the 740-residue chain is Putative Pol polyprotein from transposon element Bs1 (740 aa).

A PPR repeat occupies Thr469–Pro503.

Its function is as follows. Bs1 is probably an active plant retrotransposon. This Zea mays (Maize) protein is Putative Pol polyprotein from transposon element Bs1.